We begin with the raw amino-acid sequence, 437 residues long: Major royal jelly protein 6 (437 aa).

The first 20 residues, 1–20 (MTNWLLLIVCLSIACQDVTS), serve as a signal peptide directing secretion. N-linked (GlcNAc...) asparagine glycosylation is found at Asn-78, Asn-164, Asn-181, Asn-201, and Asn-324.

This sequence belongs to the major royal jelly protein family. Found in and secreted from the hypopharyngeal glands of the worker honey bee (at protein level); expression peaks at 20 days post eclosion. Expressed in the spermatheca of adult queen bees (at protein level); Expression levels are higher in mated queens than in virgin queens. Expressed at low level in the brains of adult worker bees. Protein abundance does not seem to correlate with transcript abundance.

It is found in the secreted. In terms of biological role, component of royal jelly, a substance produced in the hypopharyngeal gland containing proteins, free amino acids, fatty acids, sugars and other nutrients, which is fed to developing larvae by worker nurse bees. All larvae are fed some royal jelly (also known as worker jelly) early in their development but it forms the principal source of nutrition for larvae destined to become queen bees. Produced in the spermatheca of adult queen bees, along with other major royal jelly proteins, where it may act as a nutrient supply for sperm stored by mated queens, or be involved in energy metabolism. This is Major royal jelly protein 6 from Apis mellifera (Honeybee).